The primary structure comprises 386 residues: Short integuments 2, mitochondrial (386 aa).

The region spanning 37–207 is the CP-type G domain; it reads TRAIRNRLKL…VLDSPGVLVP (171 aa). Residues 55–59 carry the DARXP motif motif; that stretch reads DARIP. The interval 81 to 84 is G4; the sequence is NKKD. Residues 81 to 84, 109 to 110, and 146 to 151 contribute to the GTP site; these read NKKD, NA, and NVGKSA. The tract at residues 109-111 is G5; that stretch reads NAH. A G1 region spans residues 143-150; sequence GVPNVGKS. The tract at residues 180–184 is G2; the sequence is GVTQD. Positions 200-203 are G3; that stretch reads DSPG. Glycine 203 contributes to the GTP binding site.

It belongs to the TRAFAC class YlqF/YawG GTPase family. MTG1 subfamily. As to expression, expressed in seedlings, roots, leaves, stems, inflorescences and siliques.

The protein resides in the mitochondrion. In terms of biological role, GTPase that may function in mitochondrial ribosome assembly. Involved in a variety of growth processes during vegetative development and promotes growth and cell division in the developing integuments. The sequence is that of Short integuments 2, mitochondrial from Arabidopsis thaliana (Mouse-ear cress).